Consider the following 367-residue polypeptide: Phosphoribosylaminoimidazole-succinocarboxamide synthase (367 aa).

It belongs to the SAICAR synthetase family.

The catalysed reaction is 5-amino-1-(5-phospho-D-ribosyl)imidazole-4-carboxylate + L-aspartate + ATP = (2S)-2-[5-amino-1-(5-phospho-beta-D-ribosyl)imidazole-4-carboxamido]succinate + ADP + phosphate + 2 H(+). It participates in purine metabolism; IMP biosynthesis via de novo pathway; 5-amino-1-(5-phospho-D-ribosyl)imidazole-4-carboxamide from 5-amino-1-(5-phospho-D-ribosyl)imidazole-4-carboxylate: step 1/2. This is Phosphoribosylaminoimidazole-succinocarboxamide synthase from Aliivibrio fischeri (strain ATCC 700601 / ES114) (Vibrio fischeri).